Here is a 257-residue protein sequence, read N- to C-terminus: Protein orai-2 (257 aa).

Transmembrane regions (helical) follow at residues 62–79 (ASSR…VAMV), 94–114 (LIAF…ALLI), 156–176 (LGIL…FLPI), and 201–221 (LVST…TIHF).

This sequence belongs to the Orai family.

Its subcellular location is the membrane. In terms of biological role, ca(2+) release-activated Ca(2+)-like (CRAC-like) channel subunit which mediates Ca(2+) influx and increase in Ca(2+)-selective current by synergy with the Ca(2+) sensor, stim1. This is Protein orai-2 (orai2) from Xenopus laevis (African clawed frog).